Consider the following 617-residue polypeptide: Serine/threonine-protein phosphatase 2A activator 1 (617 aa).

Pro residues predominate over residues 1-11; sequence MDPTSKRPPPA. Disordered regions lie at residues 1 to 25, 84 to 169, 230 to 261, 376 to 398, and 572 to 617; these read MDPT…PKLE, VSTS…ESES, GAGG…TNEQ, SSPN…SDIT, and RFTP…PWTK. Residues 84 to 93 show a composition bias toward polar residues; it reads VSTSEPTTDG. Positions 94 to 104 are enriched in low complexity; it reads QQQQQQQQQRQ. Over residues 239-252 the composition is skewed to acidic residues; that stretch reads EEGTETETETETEG.

This sequence belongs to the PTPA-type PPIase family.

Its subcellular location is the cytoplasm. It is found in the nucleus. The enzyme catalyses [protein]-peptidylproline (omega=180) = [protein]-peptidylproline (omega=0). Functionally, PPIases accelerate the folding of proteins. It catalyzes the cis-trans isomerization of proline imidic peptide bonds in oligopeptides. Acts as a regulatory subunit for PP2A-like phosphatases modulating their activity or substrate specificity, probably by inducing a conformational change in the catalytic subunit, a direct target of the PPIase. Can reactivate inactive phosphatase PP2A-phosphatase methylesterase complexes (PP2Ai) in presence of ATP and Mg(2+) by dissociating the inactive form from the complex. The protein is Serine/threonine-protein phosphatase 2A activator 1 (rrd-1) of Neurospora crassa (strain ATCC 24698 / 74-OR23-1A / CBS 708.71 / DSM 1257 / FGSC 987).